Reading from the N-terminus, the 695-residue chain is Elongation factor G (695 aa).

Residues 12 to 286 (DKLRNIGIMA…AVIDYLPSPL (275 aa)) form the tr-type G domain. Residues 21-28 (AHIDAGKT), 85-89 (DTPGH), and 139-142 (NKMD) each bind GTP.

It belongs to the TRAFAC class translation factor GTPase superfamily. Classic translation factor GTPase family. EF-G/EF-2 subfamily.

The protein resides in the cytoplasm. Its function is as follows. Catalyzes the GTP-dependent ribosomal translocation step during translation elongation. During this step, the ribosome changes from the pre-translocational (PRE) to the post-translocational (POST) state as the newly formed A-site-bound peptidyl-tRNA and P-site-bound deacylated tRNA move to the P and E sites, respectively. Catalyzes the coordinated movement of the two tRNA molecules, the mRNA and conformational changes in the ribosome. This Thermotoga petrophila (strain ATCC BAA-488 / DSM 13995 / JCM 10881 / RKU-1) protein is Elongation factor G.